A 191-amino-acid polypeptide reads, in one-letter code: Protein GrpE (191 aa).

A compositionally biased stretch (basic and acidic residues) spans 1 to 19 (MKDEHNQKHDHLSQKEPES). Residues 1–44 (MKDEHNQKHDHLSQKEPESYQKACACKEQQDEEMQEAGEKEGEI) form a disordered region.

Belongs to the GrpE family. In terms of assembly, homodimer.

The protein resides in the cytoplasm. In terms of biological role, participates actively in the response to hyperosmotic and heat shock by preventing the aggregation of stress-denatured proteins, in association with DnaK and GrpE. It is the nucleotide exchange factor for DnaK and may function as a thermosensor. Unfolded proteins bind initially to DnaJ; upon interaction with the DnaJ-bound protein, DnaK hydrolyzes its bound ATP, resulting in the formation of a stable complex. GrpE releases ADP from DnaK; ATP binding to DnaK triggers the release of the substrate protein, thus completing the reaction cycle. Several rounds of ATP-dependent interactions between DnaJ, DnaK and GrpE are required for fully efficient folding. The polypeptide is Protein GrpE (Helicobacter pylori (strain G27)).